A 414-amino-acid polypeptide reads, in one-letter code: Alanine--glyoxylate aminotransferase (414 aa).

A mitochondrion-targeting transit peptide spans 1–23 (MFQALAKASAALGPRAAGWVRTM). Lys-231 bears the N6-(pyridoxal phosphate)lysine mark. Lys-256 and Lys-334 each carry N6-acetyllysine. Substrate is bound at residue Arg-382.

Belongs to the class-V pyridoxal-phosphate-dependent aminotransferase family. As to quaternary structure, homodimer. Pyridoxal 5'-phosphate is required as a cofactor.

The protein resides in the peroxisome. It localises to the mitochondrion matrix. The catalysed reaction is L-serine + pyruvate = 3-hydroxypyruvate + L-alanine. The enzyme catalyses glyoxylate + L-alanine = glycine + pyruvate. Catalyzes the transamination of glyoxylate to glycine and contributes to the glyoxylate detoxification. In terms of biological role, catalyzes the transamination between L-serine and pyruvate and weakly contributes to gluconeogenesis from the L-serine metabolism. In Callithrix jacchus (White-tufted-ear marmoset), this protein is Alanine--glyoxylate aminotransferase.